Here is a 236-residue protein sequence, read N- to C-terminus: Phosphoribosylaminoimidazole-succinocarboxamide synthase (236 aa).

This sequence belongs to the SAICAR synthetase family.

It carries out the reaction 5-amino-1-(5-phospho-D-ribosyl)imidazole-4-carboxylate + L-aspartate + ATP = (2S)-2-[5-amino-1-(5-phospho-beta-D-ribosyl)imidazole-4-carboxamido]succinate + ADP + phosphate + 2 H(+). The protein operates within purine metabolism; IMP biosynthesis via de novo pathway; 5-amino-1-(5-phospho-D-ribosyl)imidazole-4-carboxamide from 5-amino-1-(5-phospho-D-ribosyl)imidazole-4-carboxylate: step 1/2. The sequence is that of Phosphoribosylaminoimidazole-succinocarboxamide synthase from Pseudomonas paraeruginosa (strain DSM 24068 / PA7) (Pseudomonas aeruginosa (strain PA7)).